The following is a 362-amino-acid chain: Chorismate synthase (362 aa).

The NADP(+) site is built by arginine 48 and arginine 54. Residues 131–133 (RSS), 243–244 (NA), glycine 287, 302–306 (KPTSS), and arginine 328 each bind FMN.

Belongs to the chorismate synthase family. In terms of assembly, homotetramer. FMNH2 serves as cofactor.

The enzyme catalyses 5-O-(1-carboxyvinyl)-3-phosphoshikimate = chorismate + phosphate. It functions in the pathway metabolic intermediate biosynthesis; chorismate biosynthesis; chorismate from D-erythrose 4-phosphate and phosphoenolpyruvate: step 7/7. Functionally, catalyzes the anti-1,4-elimination of the C-3 phosphate and the C-6 proR hydrogen from 5-enolpyruvylshikimate-3-phosphate (EPSP) to yield chorismate, which is the branch point compound that serves as the starting substrate for the three terminal pathways of aromatic amino acid biosynthesis. This reaction introduces a second double bond into the aromatic ring system. The protein is Chorismate synthase of Bradyrhizobium diazoefficiens (strain JCM 10833 / BCRC 13528 / IAM 13628 / NBRC 14792 / USDA 110).